The following is a 276-amino-acid chain: Formamidopyrimidine-DNA glycosylase (276 aa).

Pro2 functions as the Schiff-base intermediate with DNA in the catalytic mechanism. Glu3 functions as the Proton donor in the catalytic mechanism. Catalysis depends on Lys58, which acts as the Proton donor; for beta-elimination activity. Residues His94, Arg112, and Arg157 each contribute to the DNA site. Residues 242–276 (FVYDRAGLPCRVCGTPIKQIVQGQRSTYFCPTCQR) form an FPG-type zinc finger. Arg266 functions as the Proton donor; for delta-elimination activity in the catalytic mechanism.

This sequence belongs to the FPG family. As to quaternary structure, monomer. It depends on Zn(2+) as a cofactor.

It catalyses the reaction Hydrolysis of DNA containing ring-opened 7-methylguanine residues, releasing 2,6-diamino-4-hydroxy-5-(N-methyl)formamidopyrimidine.. It carries out the reaction 2'-deoxyribonucleotide-(2'-deoxyribose 5'-phosphate)-2'-deoxyribonucleotide-DNA = a 3'-end 2'-deoxyribonucleotide-(2,3-dehydro-2,3-deoxyribose 5'-phosphate)-DNA + a 5'-end 5'-phospho-2'-deoxyribonucleoside-DNA + H(+). In terms of biological role, involved in base excision repair of DNA damaged by oxidation or by mutagenic agents. Acts as a DNA glycosylase that recognizes and removes damaged bases. Has a preference for oxidized purines, such as 7,8-dihydro-8-oxoguanine (8-oxoG). Has AP (apurinic/apyrimidinic) lyase activity and introduces nicks in the DNA strand. Cleaves the DNA backbone by beta-delta elimination to generate a single-strand break at the site of the removed base with both 3'- and 5'-phosphates. The polypeptide is Formamidopyrimidine-DNA glycosylase (Paraburkholderia xenovorans (strain LB400)).